Reading from the N-terminus, the 647-residue chain is DNA polymerase subunit gamma-1 (647 aa).

Positions 116–147 are disordered; the sequence is ERPGRAEQSQMQDEDGLPELVEESSQPSFHHG. Acidic residues predominate over residues 127-137; the sequence is QDEDGLPELVE.

It belongs to the DNA polymerase type-A family. In terms of assembly, heterotrimer composed of a catalytic subunit and a homodimer of accessory subunits. Interacts with TTC3. The cofactor is Mg(2+).

The protein localises to the mitochondrion. It is found in the mitochondrion matrix. The protein resides in the mitochondrion nucleoid. The enzyme catalyses DNA(n) + a 2'-deoxyribonucleoside 5'-triphosphate = DNA(n+1) + diphosphate. Involved in the replication of mitochondrial DNA. Associates with mitochondrial DNA. In Gallus gallus (Chicken), this protein is DNA polymerase subunit gamma-1 (POLG).